Reading from the N-terminus, the 318-residue chain is MGEKLQKILARAGHGSRREIEAIIQQGRVSVDGKVSKLGDRVEVTQSTKIRLDGHLLSIKESEENVCRVLAYYKPEGELCTRNDPEGRPTVFDRLPKLRGSRWVAVGRLDVNTSGLLLFTTDGELANRLMHPSREVEREYAVRVFGQIDDDKIKQLSRGVQLEDGPAAFRTISYQGGEGINQWYNVTLTEGRNREVRRLWEAVGVQVSRLIRVRYGDINLPKGLPRGGWTELDLKATNYLRELVELDVETVSKLPVEKDRRRVKANQIRRAVKRHTEVSGRQVAGRQGSARKGSTRQNVGNAAPAATASRRSGPKKRG.

An S4 RNA-binding domain is found at 3–75; sequence EKLQKILARA…VCRVLAYYKP (73 aa). Asp110 (nucleophile) is an active-site residue. Positions 271-318 are disordered; the sequence is AVKRHTEVSGRQVAGRQGSARKGSTRQNVGNAAPAATASRRSGPKKRG.

Belongs to the pseudouridine synthase RsuA family.

It catalyses the reaction uridine(2605) in 23S rRNA = pseudouridine(2605) in 23S rRNA. Its function is as follows. Responsible for synthesis of pseudouridine from uracil-2605 in 23S ribosomal RNA. The sequence is that of Ribosomal large subunit pseudouridine synthase B (rluB) from Yersinia pestis.